Reading from the N-terminus, the 523-residue chain is MALMSQAGSSHCIYSEKVRCISGHRSIINNMDMFRMREICFGVDISSRNASRRVQGNYLNHIGVGSRRGDLTIVAASPPTEDAVVAAEPLTKEDLVGYLASGCKSKEKWRIGTEHEKFGFEFGTLRPMKYDQIADLLNGIAERFDWEKVMEGDKIIGLKQGKQSISLEPGGQFELSGAPLETLHQTCAEVNSHLYQVKAVAEEMGIGFLGTGFQPKWGLKDIPIMPKGRYEIIRNYMPKVGSLGLDMMFRTCTVQVNLDFSSEADMIRKFRAGLALQPIATALFANSPFTEGKPNGYLSKRSHIWTDTDNNRAGMLPFVFDDSFGFEQYVDYALDVPMYFVYRKKKYVDCTGLSFRDFMNGKLPPIPGEYPTLNDWENHLTTIFPEVRLKRYLEMRGADGGPWRRLCALPAFWVGILYDEGSLQSVLDMTFDWTAEERDMLRNKVPKSGLKTPFRDGLLMHVAQDVVKLAKEGLERRGFKETGFLNEVAEVVKTGVTPAEKLLELYHGKWGQSVDPIFEELLY.

The cysteines at positions 187 and 407 are disulfide-linked.

Belongs to the carboxylate-amine ligase family. Glutamate--cysteine ligase type 2 subfamily. Homodimer or monomer when oxidized or reduced, respectively. The Cys-187-Cys-407 disulfide bridge is known to modulate the enzyme activity according to the redox status. The oxidized form constitutes the active enzyme.

It is found in the plastid. It localises to the chloroplast. The enzyme catalyses L-cysteine + L-glutamate + ATP = gamma-L-glutamyl-L-cysteine + ADP + phosphate + H(+). It functions in the pathway sulfur metabolism; glutathione biosynthesis; glutathione from L-cysteine and L-glutamate: step 1/2. The polypeptide is Glutamate--cysteine ligase, chloroplastic (GSH1) (Solanum lycopersicum (Tomato)).